A 465-amino-acid chain; its full sequence is Cytochrome P450 85A2 (465 aa).

Residues 2–22 form a helical membrane-spanning segment; it reads GIMMMILGLLVIIVCLCTALL. Position 415 (cysteine 415) interacts with heme. The S-farnesyl cysteine moiety is linked to residue cysteine 462. Residues 462–465 carry the Farnesylation CAAX motif motif; that stretch reads CSPY.

It belongs to the cytochrome P450 family. Requires heme as cofactor. In terms of processing, isoprenylated (farnesylated); this addition of a 15-carbon farnesyl isoprenoid to the carboxy terminus is required for endoplasmic reticulum localization and essential for the biosynthesis of brassinolide. As to expression, expressed in stems, hypocotyls, leaves, siliques, shoots, and roots, with a higher expression in apical shoots.

It is found in the membrane. It localises to the endoplasmic reticulum. The catalysed reaction is 6-deoxoteasterone + reduced [NADPH--hemoprotein reductase] + O2 = 6alpha-hydroxyteasterone + oxidized [NADPH--hemoprotein reductase] + H2O + H(+). It carries out the reaction 6alpha-hydroxytyphasterol + reduced [NADPH--hemoprotein reductase] + O2 = teasterone + oxidized [NADPH--hemoprotein reductase] + 2 H2O + H(+). The enzyme catalyses 3-dehydro-6-deoxoteasterone + reduced [NADPH--hemoprotein reductase] + O2 = 3-dehydro-6alpha-hydroxyteasterone + oxidized [NADPH--hemoprotein reductase] + H2O + H(+). It catalyses the reaction 3-dehydro-6alpha-hydroxyteasterone + reduced [NADPH--hemoprotein reductase] + O2 = 3-dehydroteasterone + oxidized [NADPH--hemoprotein reductase] + 2 H2O + H(+). The catalysed reaction is 6-deoxotyphasterol + reduced [NADPH--hemoprotein reductase] + O2 = 6alpha-hydroxytyphasterol + oxidized [NADPH--hemoprotein reductase] + H2O + H(+). It carries out the reaction 6alpha-hydroxytyphasterol + reduced [NADPH--hemoprotein reductase] + O2 = typhasterol + oxidized [NADPH--hemoprotein reductase] + 2 H2O + H(+). The enzyme catalyses 6-deoxocastasterone + reduced [NADPH--hemoprotein reductase] + O2 = 6alpha-hydroxycastasterone + oxidized [NADPH--hemoprotein reductase] + H2O + H(+). It catalyses the reaction 6alpha-hydroxycastasterone + reduced [NADPH--hemoprotein reductase] + O2 = castasterone + oxidized [NADPH--hemoprotein reductase] + 2 H2O + H(+). The catalysed reaction is 6-deoxo-28-norteasterone + 2 reduced [NADPH--hemoprotein reductase] + 2 O2 = 28-norteasterone + 2 oxidized [NADPH--hemoprotein reductase] + 3 H2O + 2 H(+). It carries out the reaction 6-deoxo-28-norteasterone + reduced [NADPH--hemoprotein reductase] + O2 = 6alpha-hydroxy-28-norteasterone + oxidized [NADPH--hemoprotein reductase] + H2O + H(+). The enzyme catalyses 6alpha-hydroxy-28-norteasterone + reduced [NADPH--hemoprotein reductase] + O2 = 28-norteasterone + oxidized [NADPH--hemoprotein reductase] + 2 H2O + H(+). It catalyses the reaction 6-deoxo-28-nortyphasterol + 2 reduced [NADPH--hemoprotein reductase] + 2 O2 = 28-nortyphasterol + 2 oxidized [NADPH--hemoprotein reductase] + 3 H2O + 2 H(+). The catalysed reaction is 6-deoxo-28-nortyphasterol + reduced [NADPH--hemoprotein reductase] + O2 = 6alpha-hydroxy-28-nortyphasterol + oxidized [NADPH--hemoprotein reductase] + H2O + H(+). It carries out the reaction 6alpha-hydroxy-28-nortyphasterol + reduced [NADPH--hemoprotein reductase] + O2 = 28-nortyphasterol + oxidized [NADPH--hemoprotein reductase] + 2 H2O + H(+). The enzyme catalyses 6-deoxo-28-norcastasterone + 2 reduced [NADPH--hemoprotein reductase] + 2 O2 = 28-norcastasterone + 2 oxidized [NADPH--hemoprotein reductase] + 3 H2O + 2 H(+). It catalyses the reaction 6-deoxo-28-norcastasterone + reduced [NADPH--hemoprotein reductase] + O2 = 6alpha-hydroxy-28-norcastasterone + oxidized [NADPH--hemoprotein reductase] + H2O + H(+). The catalysed reaction is 6alpha-hydroxy-28-norcastasterone + reduced [NADPH--hemoprotein reductase] + O2 = 28-norcastasterone + oxidized [NADPH--hemoprotein reductase] + 2 H2O + H(+). It carries out the reaction 3-dehydro-6-deoxo-28-norteasterone + 2 reduced [NADPH--hemoprotein reductase] + 2 O2 = 6-dehydro-28-norteasterone + 2 oxidized [NADPH--hemoprotein reductase] + 3 H2O + 2 H(+). The enzyme catalyses 3-dehydro-6-deoxo-28-norteasterone + reduced [NADPH--hemoprotein reductase] + O2 = 3-dehydro-6alpha-hydroxy-28-norteasterone + oxidized [NADPH--hemoprotein reductase] + H2O + H(+). It catalyses the reaction 3-dehydro-6alpha-hydroxy-28-norteasterone + reduced [NADPH--hemoprotein reductase] + O2 = 6-dehydro-28-norteasterone + oxidized [NADPH--hemoprotein reductase] + 2 H2O + H(+). The catalysed reaction is teasterone + reduced [NADPH--hemoprotein reductase] + O2 = 7-oxateasterone + oxidized [NADPH--hemoprotein reductase] + H2O + H(+). It carries out the reaction castasterone + reduced [NADPH--hemoprotein reductase] + O2 = brassinolide + oxidized [NADPH--hemoprotein reductase] + H2O + H(+). The enzyme catalyses typhasterol + reduced [NADPH--hemoprotein reductase] + O2 = 7-oxatyphasterol + oxidized [NADPH--hemoprotein reductase] + H2O + H(+). It catalyses the reaction 6-deoxocastasterone + 2 reduced [NADPH--hemoprotein reductase] + 2 O2 = castasterone + 2 oxidized [NADPH--hemoprotein reductase] + 3 H2O + 2 H(+). The catalysed reaction is 6-deoxoteasterone + 2 reduced [NADPH--hemoprotein reductase] + 2 O2 = teasterone + 2 oxidized [NADPH--hemoprotein reductase] + 3 H2O + 2 H(+). It carries out the reaction 6-deoxotyphasterol + 2 reduced [NADPH--hemoprotein reductase] + 2 O2 = typhasterol + 2 oxidized [NADPH--hemoprotein reductase] + 3 H2O + 2 H(+). The enzyme catalyses 3-dehydro-6-deoxoteasterone + 2 reduced [NADPH--hemoprotein reductase] + 2 O2 = 3-dehydroteasterone + 2 oxidized [NADPH--hemoprotein reductase] + 3 H2O + 2 H(+). Its pathway is plant hormone biosynthesis; brassinosteroid biosynthesis. Its function is as follows. Mediates Baeyer-Villiger oxidation and catalyzes the C6-oxidation step and lactonization in brassinosteroids biosynthesis. Converts 6-deoxocastasterone (6-deoxoCS) to castasterone (CS), and castasterone to brassinolide (BL). May also convert 6-deoxoteasterone (6-deoxoTE) to teasterone (TE), 3-dehydro-6-deoxoteasterone (6-deoxo3DT, 6-deoxo-3-DHT) to 3-dehydroteasterone (3DT, 3-DHT), and 6-deoxotyphasterol (6-deoxoTY) to typhasterol (TY). Also seems to be able to convert teasterone (TE) and typhasterol (TY) to 7-oxateasterone (7-OXTE) and 7-oxatyphasterol (7-OXTY), respectively. Catalyzes the conversion of 6-deoxo-28-norteasterone (6-deoxo-28-norTE) to 28-norteasterone (28-norTE), 6-deoxo-28-nordeoxoteasterone (6-deoxo-28-nor-3-DHT) to 28-nordeoxoteasterone (28-nor-3-DHT), 6-deoxo-28-nortyphasterol (6-deoxo-28-norTY) to 28-nortyphasterol (28-norTY) and 6-deoxo-28-norcastasterone (6-deoxo-28-norCS) to 28-norcastasterone (28-norCS). Involved in a negative regulation of responses to abscisic acid (ABA) and drought tolerance. This chain is Cytochrome P450 85A2 (CYP85A2), found in Arabidopsis thaliana (Mouse-ear cress).